The primary structure comprises 233 residues: Germin-like protein 3-7 (233 aa).

An N-terminal signal peptide occupies residues 1–35; that stretch reads MSSSSSMECTGNMSAAPLLVLTVAVLAVLASTCAA. A disulfide bridge links cysteine 44 with cysteine 63. The 149-residue stretch at 77–225 folds into the Cupin type-1 domain; the sequence is AGLAAAGSTD…SFQVDAEIIK (149 aa). Residues histidine 125, histidine 127, glutamate 132, and histidine 171 each coordinate Mn(2+). Asparagine 178 is a glycosylation site (N-linked (GlcNAc...) asparagine).

The protein belongs to the germin family. In terms of assembly, oligomer (believed to be a pentamer but probably hexamer).

The protein resides in the secreted. The protein localises to the extracellular space. It is found in the apoplast. Its function is as follows. May play a role in plant defense. Probably has no oxalate oxidase activity even if the active site is conserved. This chain is Germin-like protein 3-7 (GER7), found in Oryza sativa subsp. japonica (Rice).